The sequence spans 253 residues: Low affinity immunoglobulin gamma Fc region receptor III-B (253 aa).

Residues 1–20 (MGQPLPPVALLLLVSASSRA) form the signal peptide. Residues 21–207 (ADVPKALVLL…VSSSVLPWHQ (187 aa)) lie on the Extracellular side of the membrane. Ig-like C2-type domains are found at residues 24-105 (PKAL…LRVH) and 120-189 (EGEP…VTIT). 2 disulfide bridges follow: Cys-47–Cys-89 and Cys-128–Cys-172. 4 N-linked (GlcNAc...) asparagine glycosylation sites follow: Asn-56, Asn-63, Asn-165, and Asn-180. Residues 208 to 226 (IAFCLVMGLLLAADTGLYF) form a helical membrane-spanning segment. At 227–253 (SVQRDLRSSQRARKEHTLGWSLGSQDK) the chain is on the cytoplasmic side.

As to quaternary structure, forms a heterooligomeric complex with ITAM-containing signaling subunits FCER1G. Interacts (via transmembrane domain) with signaling subunits; this interaction is a prerequisite for receptor complex expression on the cell surface and intracellular signal transduction. Binds the Fc region of antigen-complexed IgG.

The protein resides in the cell membrane. Its function is as follows. Receptor for the invariable Fc fragment of immunoglobulin gamma (IgG). Optimally activated upon binding of clustered antigen-IgG complexes displayed on cell surfaces, triggers lysis of antibody-coated cells, a process known as antibody-dependent cellular cytotoxicity (ADCC). Does not bind free monomeric IgG, thus avoiding inappropriate effector cell activation in the absence of antigenic trigger. Mediates IgG effector functions on natural killer (NK) cells. Binds antigen-IgG complexes generated upon infection and triggers NK cell-dependent cytokine production and degranulation to limit viral load and propagation. Fc-binding subunit that associates with FCER1G adapters to form functional signaling complexes. Following the engagement of antigen-IgG complexes, triggers phosphorylation of immunoreceptor tyrosine-based activation motif (ITAM)-containing adapters with subsequent activation of phosphatidylinositol 3-kinase signaling and sustained elevation of intracellular calcium that ultimately drive NK cell activation. Mediates enhanced ADCC in response to afucosylated IgGs. This chain is Low affinity immunoglobulin gamma Fc region receptor III-B (FCGR3B), found in Oryctolagus cuniculus (Rabbit).